Here is a 366-residue protein sequence, read N- to C-terminus: tRNA pseudouridine synthase B (366 aa).

The disordered stretch occupies residues 1–55; that stretch reads MTVTTPDALLAPHDVQHAGADESAAQIRKPRDNNDPRNANRGGGNGKPRRDKRDV. D92 functions as the Nucleophile in the catalytic mechanism.

This sequence belongs to the pseudouridine synthase TruB family. Type 1 subfamily.

The enzyme catalyses uridine(55) in tRNA = pseudouridine(55) in tRNA. Responsible for synthesis of pseudouridine from uracil-55 in the psi GC loop of transfer RNAs. The sequence is that of tRNA pseudouridine synthase B from Rhodopseudomonas palustris (strain ATCC BAA-98 / CGA009).